A 337-amino-acid chain; its full sequence is CMP-N-acetylneuraminate-beta-galactosamide-alpha-2,3-sialyltransferase 1 (337 aa).

The Cytoplasmic segment spans residues 1–4 (MRRK). The chain crosses the membrane as a helical; Signal-anchor for type II membrane protein span at residues 5-25 (TLKYLTFFLLFIFLTSFVLNY). Residues 26-337 (SNTGVPSAWF…INKIRIFKGR (312 aa)) lie on the Lumenal side of the membrane. 3 disulfides stabilise this stretch: C56-C61, C58-C136, and C139-C278. An N-linked (GlcNAc...) asparagine glycan is attached at N76. Q102 contributes to the substrate binding site. N109 carries N-linked (GlcNAc...) asparagine glycosylation. Substrate contacts are provided by N144, N167, Y227, Y263, G267, G287, H296, and H313. N320 carries N-linked (GlcNAc...) asparagine glycosylation.

The protein belongs to the glycosyltransferase 29 family. The soluble form derives from the membrane form by proteolytic processing. In terms of tissue distribution, highly expressed in submaxillary gland and to a much lesser extent in liver, lung, kidney, heart and brain.

It is found in the golgi apparatus. Its subcellular location is the golgi stack membrane. The protein localises to the trans-Golgi network membrane. It localises to the secreted. The enzyme catalyses a beta-D-galactosyl-(1-&gt;3)-N-acetyl-alpha-D-galactosaminyl derivative + CMP-N-acetyl-beta-neuraminate = an N-acetyl-alpha-neuraminyl-(2-&gt;3)-beta-D-galactosyl-(1-&gt;3)-N-acetyl-alpha-D-galactosaminyl derivative + CMP + H(+). It carries out the reaction a ganglioside GM1 (d18:1(4E)) + CMP-N-acetyl-beta-neuraminate = a ganglioside GD1a (d18:1(4E)) + CMP + H(+). It catalyses the reaction ganglioside GM1 (d18:1(4E)/18:0) + CMP-N-acetyl-beta-neuraminate = ganglioside GD1a (18:1(4E)/18:0) + CMP + H(+). The catalysed reaction is a ganglioside GA1 + CMP-N-acetyl-beta-neuraminate = a ganglioside GM1b + CMP + H(+). The enzyme catalyses a ganglioside GA1 (d18:1(4E)) + CMP-N-acetyl-beta-neuraminate = a ganglioside GM1b (d18:1(4E)) + CMP + H(+). It carries out the reaction a ganglioside GD1b + CMP-N-acetyl-beta-neuraminate = a ganglioside GT1b + CMP + H(+). It catalyses the reaction a 3-O-[beta-D-galactosyl-(1-&gt;3)-N-acetyl-alpha-D-galactosaminyl]-L-threonyl-[protein] + CMP-N-acetyl-beta-neuraminate = a 3-O-[N-acetyl-alpha-neuraminyl-(2-&gt;3)-beta-D-galactosyl-(1-&gt;3)-N-acetyl-alpha-D-galactosaminyl]-L-threonyl-[protein] + CMP + H(+). The catalysed reaction is a 3-O-[beta-D-galactosyl-(1-&gt;3)-N-acetyl-alpha-D-galactosaminyl]-L-seryl-[protein] + CMP-N-acetyl-beta-neuraminate = 3-O-[N-acetyl-alpha-neuraminyl-(2-&gt;3)-beta-D-galactosyl-(1-&gt;3)-N-acetyl-alpha-D-galactosaminyl]-L-seryl-[protein] + CMP + H(+). It functions in the pathway protein modification; protein glycosylation. It participates in glycolipid biosynthesis. A beta-galactoside alpha2-&gt;3 sialyltransferase involved in terminal sialylation of glycoproteins and glycolipids. Catalyzes the transfer of sialic acid (N-acetyl-neuraminic acid; Neu5Ac) from the nucleotide sugar donor CMP-Neu5Ac onto acceptor Galbeta-(1-&gt;3)-GalNAc-terminated glycoconjugates through an alpha2-3 linkage. Adds sialic acid to the core 1 O-glycan, Galbeta-(1-&gt;3)-GalNAc-O-Ser/Thr, which is a major structure of mucin-type O-glycans. As part of a homeostatic mechanism that regulates CD8-positive T cell numbers, sialylates core 1 O-glycans of T cell glycoproteins, SPN/CD43 and PTPRC/CD45. Prevents premature apoptosis of thymic CD8-positive T cells prior to peripheral emigration, whereas in the secondary lymphoid organs controls the survival of CD8-positive memory T cells generated following a successful immune response. Transfers sialic acid to asialofetuin, presumably onto Galbeta-(1-&gt;3)-GalNAc-O-Ser. Sialylates GM1a, GA1 and GD1b gangliosides to form GD1a, GM1b and GT1b, respectively. In Mus musculus (Mouse), this protein is CMP-N-acetylneuraminate-beta-galactosamide-alpha-2,3-sialyltransferase 1 (St3gal1).